A 584-amino-acid polypeptide reads, in one-letter code: Inactive metallocarboxypeptidase ECM14 (584 aa).

Positions 1 to 20 (MHLLPVITAVALIYTPLASA) are cleaved as a signal peptide. Positions 21-174 (VPSSSNPQFP…QAVYESYPQP (154 aa)) are excised as a propeptide. The 323-residue stretch at 202–524 (DYQPLSVMTP…NAVLEFGKFL (323 aa)) folds into the Peptidase M14 domain. Zn(2+)-binding residues include H267 and E270. Substrate contacts are provided by residues 267–270 (HARE), R325, and 342–343 (DR). C336 and C359 are disulfide-bonded. N383 and N389 each carry an N-linked (GlcNAc...) asparagine glycan. H399 is a Zn(2+) binding site. 400 to 401 (SY) is a substrate binding site. Residues 564–584 (QQLDDEDGEADSHWVLRTQRS) are disordered.

The protein belongs to the peptidase M14 family. Requires Zn(2+) as cofactor.

Its subcellular location is the vacuole. The protein localises to the secreted. Functionally, inactive carboxypeptidase that may play a role in cell wall organization and biogenesis. The protein is Inactive metallocarboxypeptidase ECM14 (ECM14) of Uncinocarpus reesii (strain UAMH 1704).